The following is a 331-amino-acid chain: Ketol-acid reductoisomerase (NADP(+)) (331 aa).

A KARI N-terminal Rossmann domain is found at Leu2–Thr181. Residues Tyr25 to Gln28, Arg48, Ser52, and Asp82 to Gln85 contribute to the NADP(+) site. Residue His107 is part of the active site. An NADP(+)-binding site is contributed by Gly133. Residues Ser182–Phe327 enclose the KARI C-terminal knotted domain. The Mg(2+) site is built by Asp190, Glu194, Glu226, and Glu230. Ser251 is a binding site for substrate.

The protein belongs to the ketol-acid reductoisomerase family. Mg(2+) serves as cofactor.

The catalysed reaction is (2R)-2,3-dihydroxy-3-methylbutanoate + NADP(+) = (2S)-2-acetolactate + NADPH + H(+). It catalyses the reaction (2R,3R)-2,3-dihydroxy-3-methylpentanoate + NADP(+) = (S)-2-ethyl-2-hydroxy-3-oxobutanoate + NADPH + H(+). It participates in amino-acid biosynthesis; L-isoleucine biosynthesis; L-isoleucine from 2-oxobutanoate: step 2/4. Its pathway is amino-acid biosynthesis; L-valine biosynthesis; L-valine from pyruvate: step 2/4. Involved in the biosynthesis of branched-chain amino acids (BCAA). Catalyzes an alkyl-migration followed by a ketol-acid reduction of (S)-2-acetolactate (S2AL) to yield (R)-2,3-dihydroxy-isovalerate. In the isomerase reaction, S2AL is rearranged via a Mg-dependent methyl migration to produce 3-hydroxy-3-methyl-2-ketobutyrate (HMKB). In the reductase reaction, this 2-ketoacid undergoes a metal-dependent reduction by NADPH to yield (R)-2,3-dihydroxy-isovalerate. The sequence is that of Ketol-acid reductoisomerase (NADP(+)) from Methanospirillum hungatei JF-1 (strain ATCC 27890 / DSM 864 / NBRC 100397 / JF-1).